Here is a 268-residue protein sequence, read N- to C-terminus: Tryptophan synthase alpha chain (268 aa).

Active-site proton acceptor residues include Glu-49 and Asp-60.

This sequence belongs to the TrpA family. As to quaternary structure, tetramer of two alpha and two beta chains.

It catalyses the reaction (1S,2R)-1-C-(indol-3-yl)glycerol 3-phosphate + L-serine = D-glyceraldehyde 3-phosphate + L-tryptophan + H2O. It functions in the pathway amino-acid biosynthesis; L-tryptophan biosynthesis; L-tryptophan from chorismate: step 5/5. Functionally, the alpha subunit is responsible for the aldol cleavage of indoleglycerol phosphate to indole and glyceraldehyde 3-phosphate. This Xanthomonas euvesicatoria pv. vesicatoria (strain 85-10) (Xanthomonas campestris pv. vesicatoria) protein is Tryptophan synthase alpha chain.